A 438-amino-acid chain; its full sequence is Glutamyl-tRNA(Gln) amidotransferase subunit D (438 aa).

Positions 92-422 (PDVTIIGTGG…EEVRRMMLTN (331 aa)) constitute an Asparaginase/glutaminase domain. Residues threonine 102, threonine 178, aspartate 179, and lysine 256 contribute to the active site.

The protein belongs to the asparaginase 1 family. GatD subfamily. As to quaternary structure, heterodimer of GatD and GatE.

It carries out the reaction L-glutamyl-tRNA(Gln) + L-glutamine + ATP + H2O = L-glutaminyl-tRNA(Gln) + L-glutamate + ADP + phosphate + H(+). Functionally, allows the formation of correctly charged Gln-tRNA(Gln) through the transamidation of misacylated Glu-tRNA(Gln) in organisms which lack glutaminyl-tRNA synthetase. The reaction takes place in the presence of glutamine and ATP through an activated gamma-phospho-Glu-tRNA(Gln). The GatDE system is specific for glutamate and does not act on aspartate. The sequence is that of Glutamyl-tRNA(Gln) amidotransferase subunit D from Pyrococcus horikoshii (strain ATCC 700860 / DSM 12428 / JCM 9974 / NBRC 100139 / OT-3).